A 181-amino-acid polypeptide reads, in one-letter code: GTPase RhebL1 (181 aa).

GTP-binding positions include 30–36, Gly-61, 117–120, and 147–148; these read LEDYDPT, NKAD, and SA. The short motif at 33 to 41 is the Effector region element; the sequence is YDPTVENTY. Thr-36 is a binding site for Mg(2+). Cys-178 carries the post-translational modification Cysteine methyl ester. A lipid anchor (S-farnesyl cysteine) is attached at Cys-178. A propeptide spans 179–181 (removed in mature form); that stretch reads HLM.

It belongs to the small GTPase superfamily. Rheb family. Interacts with MTOR.

The protein localises to the endomembrane system. It is found in the cytoplasm. The catalysed reaction is GTP + H2O = GDP + phosphate + H(+). Functionally, binds GTP and exhibits intrinsic GTPase activity. May activate NF-kappa-B-mediated gene transcription. Promotes signal transduction through MTOR, activates RPS6KB1, and is a downstream target of the small GTPase-activating proteins TSC1 and TSC2. In Bos taurus (Bovine), this protein is GTPase RhebL1 (RHEBL1).